The sequence spans 208 residues: NAD-dependent protein deacylase (208 aa).

The 208-residue stretch at 1 to 208 folds into the Deacetylase sirtuin-type domain; it reads MKPICVVLSG…NTGFNPVTGW (208 aa). 10-29 lines the NAD(+) pocket; the sequence is GAGISAESGIPTYRAEDGLW. Residues Y54 and R57 each contribute to the substrate site. NAD(+) is bound at residue 87–90; the sequence is QNVE. H105 serves as the catalytic Proton acceptor. NAD(+) contacts are provided by residues 170–172 and 197–199; these read GTS and NPN.

It belongs to the sirtuin family. Class III subfamily.

Its subcellular location is the cytoplasm. The enzyme catalyses N(6)-acetyl-L-lysyl-[protein] + NAD(+) + H2O = 2''-O-acetyl-ADP-D-ribose + nicotinamide + L-lysyl-[protein]. The catalysed reaction is N(6)-succinyl-L-lysyl-[protein] + NAD(+) + H2O = 2''-O-succinyl-ADP-D-ribose + nicotinamide + L-lysyl-[protein]. NAD-dependent lysine deacetylase and desuccinylase that specifically removes acetyl and succinyl groups on target proteins. Modulates the activities of several proteins which are inactive in their acylated form. This is NAD-dependent protein deacylase from Aggregatibacter actinomycetemcomitans (Actinobacillus actinomycetemcomitans).